The following is a 248-amino-acid chain: 2,3-bisphosphoglycerate-dependent phosphoglycerate mutase (248 aa).

Substrate contacts are provided by residues 10 to 17 (RHGQSEWN), 23 to 24 (TG), arginine 62, 89 to 92 (ERHY), lysine 100, 116 to 117 (RR), and 183 to 184 (GN). Histidine 11 (tele-phosphohistidine intermediate) is an active-site residue. The active-site Proton donor/acceptor is the glutamate 89.

The protein belongs to the phosphoglycerate mutase family. BPG-dependent PGAM subfamily.

The catalysed reaction is (2R)-2-phosphoglycerate = (2R)-3-phosphoglycerate. It functions in the pathway carbohydrate degradation; glycolysis; pyruvate from D-glyceraldehyde 3-phosphate: step 3/5. Its function is as follows. Catalyzes the interconversion of 2-phosphoglycerate and 3-phosphoglycerate. The sequence is that of 2,3-bisphosphoglycerate-dependent phosphoglycerate mutase from Corynebacterium glutamicum (strain ATCC 13032 / DSM 20300 / JCM 1318 / BCRC 11384 / CCUG 27702 / LMG 3730 / NBRC 12168 / NCIMB 10025 / NRRL B-2784 / 534).